The sequence spans 99 residues: Integration host factor subunit beta (99 aa).

The protein belongs to the bacterial histone-like protein family. In terms of assembly, heterodimer of an alpha and a beta chain.

Functionally, this protein is one of the two subunits of integration host factor, a specific DNA-binding protein that functions in genetic recombination as well as in transcriptional and translational control. In Rhizobium etli (strain CIAT 652), this protein is Integration host factor subunit beta.